Consider the following 788-residue polypeptide: MRCDNNYSFSILFSLLLILILDSKVVSLSTSCQSKSVCGNINIPYPFGIEKGCYLNEWYKIECKNATYPFLFKMGMAVVNISLPGDDGYNNPVSYGSIRVKIPITSIGCSRDGKESGSVLNFTDSPFYFGIGNSLVAVGCNSKASLTNINPSKVGCELNCTASKETLPSKSIPFFDKTGCSNNKLPYYSSLCTKNNGEDERSCDGNGCCIAGLLDSEAPQVIGINIESFDHGNSTKLECRVAFLTDDVSPFSNASEPKRLFAKRYATVSLGWVIQTKNLSFVNSLSCKNTKEYDNSTYNIKLVTSCICNNVTISGTDYANCGCSQGYEGNPYLPGGCKDINECLRNSYGQRQNCRESDTCVNLPGTFNCIGNKTRVTMIGVGSAFGILVLVVGIWWLRKFLKKRRMSKRKRKFFKRNGGLLLQQQLNTNKGNVEKTRIFSSRELEKATDNFSESRILGQGGQGTVYKGMLVDGRTVAVKKSKVVDEDKLEEFINEVVILSQINHRHVVKLLGCCLETEVPTLVYEFIPNGNLFQHIHEESDDYTKTWGMRLRIAVDIAGALSYLHSAASSPIYHRDIKSTNILLDEKYRTKVSDFGTSRSVTIDHTHWTTVISGTVGYVDPEYYGSSQYTDKSDVYSFGVVLVELITGEKPVITVSNSQEIRGLADHFRVAMKENRFFEIMDARIRDGCKPEQVMAVANLARRCLNSKGKKRPCMRKVFTDLEKILASQEDSLVNIENDDGADDEEEGMTMINIDDSQTIYVTAPAPSIVASSSSSDVQPLFPHPTWI.

Residues 1–27 (MRCDNNYSFSILFSLLLILILDSKVVS) form the signal peptide. The Extracellular segment spans residues 28-375 (LSTSCQSKSV…TFNCIGNKTR (348 aa)). Residues Asn65, Asn80, Asn121, Asn159, Asn233, Asn253, Asn278, Asn295, and Asn310 are each glycosylated (N-linked (GlcNAc...) asparagine). Residues 306-369 (CICNNVTISG…CVNLPGTFNC (64 aa)) form an atypical EGF-like region. 3 cysteine pairs are disulfide-bonded: Cys308/Cys321, Cys343/Cys360, and Cys354/Cys369. The N-linked (GlcNAc...) asparagine glycan is linked to Asn372. Residues 376–396 (VTMIGVGSAFGILVLVVGIWW) form a helical membrane-spanning segment. Topologically, residues 397–788 (LRKFLKKRRM…QPLFPHPTWI (392 aa)) are cytoplasmic. The 276-residue stretch at 451 to 726 (FSESRILGQG…KVFTDLEKIL (276 aa)) folds into the Protein kinase domain. ATP-binding positions include 457-465 (LGQGGQGTV) and Lys479. Residue Tyr524 is modified to Phosphotyrosine. Asp576 acts as the Proton acceptor in catalysis. Thr610 and Thr615 each carry phosphothreonine. Tyr623 is modified (phosphotyrosine).

The protein belongs to the protein kinase superfamily. Ser/Thr protein kinase family.

It localises to the membrane. The enzyme catalyses L-seryl-[protein] + ATP = O-phospho-L-seryl-[protein] + ADP + H(+). It carries out the reaction L-threonyl-[protein] + ATP = O-phospho-L-threonyl-[protein] + ADP + H(+). Putative serine/threonine-protein kinase that may function as a signaling receptor of extracellular matrix component. The polypeptide is Putative wall-associated receptor kinase-like 11 (WAKL11) (Arabidopsis thaliana (Mouse-ear cress)).